The sequence spans 184 residues: Peptidyl-tRNA hydrolase (184 aa).

Y14 contributes to the tRNA binding site. H19 acts as the Proton acceptor in catalysis. TRNA-binding residues include F64, N66, and N112.

This sequence belongs to the PTH family. As to quaternary structure, monomer.

The protein resides in the cytoplasm. It catalyses the reaction an N-acyl-L-alpha-aminoacyl-tRNA + H2O = an N-acyl-L-amino acid + a tRNA + H(+). Hydrolyzes ribosome-free peptidyl-tRNAs (with 1 or more amino acids incorporated), which drop off the ribosome during protein synthesis, or as a result of ribosome stalling. Functionally, catalyzes the release of premature peptidyl moieties from peptidyl-tRNA molecules trapped in stalled 50S ribosomal subunits, and thus maintains levels of free tRNAs and 50S ribosomes. In Listeria welshimeri serovar 6b (strain ATCC 35897 / DSM 20650 / CCUG 15529 / CIP 8149 / NCTC 11857 / SLCC 5334 / V8), this protein is Peptidyl-tRNA hydrolase.